Consider the following 194-residue polypeptide: NADH-quinone oxidoreductase subunit B 1 (194 aa).

Residues cysteine 47, cysteine 48, cysteine 113, and cysteine 142 each contribute to the [4Fe-4S] cluster site.

It belongs to the complex I 20 kDa subunit family. In terms of assembly, NDH-1 is composed of 14 different subunits. Subunits NuoB, C, D, E, F, and G constitute the peripheral sector of the complex. It depends on [4Fe-4S] cluster as a cofactor.

The protein resides in the cell inner membrane. The enzyme catalyses a quinone + NADH + 5 H(+)(in) = a quinol + NAD(+) + 4 H(+)(out). In terms of biological role, NDH-1 shuttles electrons from NADH, via FMN and iron-sulfur (Fe-S) centers, to quinones in the respiratory chain. The immediate electron acceptor for the enzyme in this species is believed to be ubiquinone. Couples the redox reaction to proton translocation (for every two electrons transferred, four hydrogen ions are translocated across the cytoplasmic membrane), and thus conserves the redox energy in a proton gradient. The protein is NADH-quinone oxidoreductase subunit B 1 of Sorangium cellulosum (strain So ce56) (Polyangium cellulosum (strain So ce56)).